The sequence spans 347 residues: Involucrin (347 aa).

2 disordered regions span residues 1–43 (MSQQ…LPAP) and 56–347 (PLED…RRSL). The span at 27-36 (ADTQQEQVKQ) shows a compositional bias: polar residues. Low complexity-rich tracts occupy residues 70 to 114 (VPEQ…QQES) and 138 to 161 (DQQQ…QQES). Composition is skewed to basic and acidic residues over residues 164-173 (QELHVDHHQQ) and 212-221 (QELHVDHHQQ). Low complexity-rich tracts occupy residues 222 to 241 (QQES…QQES) and 265 to 285 (DQQQ…QQQE). Residues 287 to 341 (QEDHQKAEHLEQEEAQREQQLKGQLEQEKKGVYQHLDQELTKRDEHLEKKGEHCW) show a composition bias toward basic and acidic residues.

Belongs to the involucrin family. As to quaternary structure, directly or indirectly cross-linked to cornifelin (CNFN). In terms of processing, substrate of transglutaminase. Specific glutamines or lysines are cross-linked to keratins, desmoplakin and to inter involucrin molecules. As to expression, keratinocytes of epidermis and other stratified squamous epithelia.

It is found in the cytoplasm. Its function is as follows. Part of the insoluble cornified cell envelope (CE) of stratified squamous epithelia. The protein is Involucrin (IVL) of Sus scrofa (Pig).